Consider the following 82-residue polypeptide: Protein RALF-like 8 (82 aa).

A signal peptide spans 1–28; it reads MGMSKSIKVILSLALVVFLALAGTKVEA. 2 cysteine pairs are disulfide-bonded: Cys-47-Cys-55 and Cys-67-Cys-73.

Belongs to the plant rapid alkalinization factor (RALF) family. Expressed in leaves and flowers.

Its subcellular location is the secreted. Cell signaling peptide that may regulate plant stress, growth, and development. Mediates a rapid alkalinization of extracellular space by mediating a transient increase in the cytoplasmic Ca(2+) concentration leading to a calcium-dependent signaling events through a cell surface receptor and a concomitant activation of some intracellular mitogen-activated protein kinases. In Arabidopsis thaliana (Mouse-ear cress), this protein is Protein RALF-like 8 (RALFL8).